Consider the following 146-residue polypeptide: Hemoglobin subunit beta (146 aa).

At Val-1 the chain carries N-acetylvaline. Residues 2 to 146 (HLTADEKAAV…VATALAHKYH (145 aa)) enclose the Globin domain. Thr-12 is subject to Phosphothreonine. Position 44 is a phosphoserine (Ser-44). Lys-59 carries the N6-acetyllysine modification. Heme b is bound at residue His-63. Lys-82 is modified (N6-acetyllysine). Position 92 (His-92) interacts with heme b. Cys-93 is subject to S-nitrosocysteine. Lys-144 carries the post-translational modification N6-acetyllysine.

The protein belongs to the globin family. Heterotetramer of two alpha chains and two beta chains. Red blood cells.

Involved in oxygen transport from the lung to the various peripheral tissues. The polypeptide is Hemoglobin subunit beta (HBB) (Taphozous georgianus (Sharp-nosed tomb bat)).